Reading from the N-terminus, the 143-residue chain is MYDLTALRQQTDEIIDNLLKDGSDPEALHIIEHHIAHHDFDKLEKLVVDAYKLGYEISEAEEIEDDQGNVLFVCDIVSEVKLNGDIITAQQQELLPLIEKAAAEYEGWGTYFEDPNAEEDEYGDDGEFFDDEDEADFNNAKVH.

Residues 113-143 (EDPNAEEDEYGDDGEFFDDEDEADFNNAKVH) form a disordered region. Positions 115–136 (PNAEEDEYGDDGEFFDDEDEAD) are enriched in acidic residues.

It belongs to the RraB family. In terms of assembly, interacts with the C-terminal region of Rne.

It localises to the cytoplasm. Globally modulates RNA abundance by binding to RNase E (Rne) and regulating its endonucleolytic activity. Can modulate Rne action in a substrate-dependent manner by altering the composition of the degradosome. This Haemophilus ducreyi (strain 35000HP / ATCC 700724) protein is Regulator of ribonuclease activity B.